The chain runs to 344 residues: Succinylglutamate desuccinylase (344 aa).

Zn(2+)-binding residues include H63, E66, and H160. Residue E224 is part of the active site.

Belongs to the AspA/AstE family. Succinylglutamate desuccinylase subfamily. The cofactor is Zn(2+).

The enzyme catalyses N-succinyl-L-glutamate + H2O = L-glutamate + succinate. Its pathway is amino-acid degradation; L-arginine degradation via AST pathway; L-glutamate and succinate from L-arginine: step 5/5. Transforms N(2)-succinylglutamate into succinate and glutamate. In Shewanella sp. (strain MR-4), this protein is Succinylglutamate desuccinylase.